An 829-amino-acid chain; its full sequence is Leucine--tRNA ligase (829 aa).

The short motif at 40 to 50 (PYPSGNIHMGH) is the 'HIGH' region element. The short motif at 581–585 (KMSKS) is the 'KMSKS' region element. Position 584 (Lys584) interacts with ATP.

This sequence belongs to the class-I aminoacyl-tRNA synthetase family.

Its subcellular location is the cytoplasm. It carries out the reaction tRNA(Leu) + L-leucine + ATP = L-leucyl-tRNA(Leu) + AMP + diphosphate. The protein is Leucine--tRNA ligase of Nitratidesulfovibrio vulgaris (strain ATCC 29579 / DSM 644 / CCUG 34227 / NCIMB 8303 / VKM B-1760 / Hildenborough) (Desulfovibrio vulgaris).